The following is a 630-amino-acid chain: Protein mono-ADP-ribosyltransferase PARP6 (630 aa).

Position 237 is an ADP-ribosylcysteine (Cys-237). In terms of domain architecture, PARP catalytic spans 394-620 (EMTQGSYLEI…QDPKIQKEIM (227 aa)). ADP-ribosyl aspartic acid is present on Asp-600.

The protein belongs to the ARTD/PARP family. In terms of processing, auto-mono-ADP-ribosylated.

The catalysed reaction is L-aspartyl-[protein] + NAD(+) = 4-O-(ADP-D-ribosyl)-L-aspartyl-[protein] + nicotinamide. It carries out the reaction L-cysteinyl-[protein] + NAD(+) = S-(ADP-D-ribosyl)-L-cysteinyl-[protein] + nicotinamide + H(+). Mono-ADP-ribosyltransferase that mediates mono-ADP-ribosylation of target proteins. The protein is Protein mono-ADP-ribosyltransferase PARP6 of Mus musculus (Mouse).